Consider the following 114-residue polypeptide: Adapter SH3BGRL (114 aa).

Residues 13–50 form a required for interaction with HER2 region; sequence STAIKKKQQDVLGFLEANKIGFEEKDIAANEENRKWMR. The segment at 54–71 is required for interaction with PFN1, HER2, and ATG12; the sequence is PENSRPATGYPLPPQIFN. Positions 61 to 67 match the SH3-binding motif; that stretch reads TGYPLPP.

Belongs to the SH3BGR family. As to quaternary structure, monomer. Interacts with PFN1/Profilin-1. Interacts with ERBB2. Interacts with ATG12. Interacts with BECN1. Interacts with translating ribosomes. Ubiquitous.

The protein resides in the cytoplasm. It is found in the cytosol. It localises to the cell membrane. Appears to function as an adapter protein that bridges proteins together or proteins with mRNAs. May function as a ubiquitin ligase-substrate adapter. Additionally, associates with translating cytoplasmic ribosomes and may promote the expression of specific mRNAs. In Homo sapiens (Human), this protein is Adapter SH3BGRL.